The sequence spans 111 residues: Large ribosomal subunit protein uL22 (111 aa).

Belongs to the universal ribosomal protein uL22 family. In terms of assembly, part of the 50S ribosomal subunit.

Its function is as follows. This protein binds specifically to 23S rRNA; its binding is stimulated by other ribosomal proteins, e.g. L4, L17, and L20. It is important during the early stages of 50S assembly. It makes multiple contacts with different domains of the 23S rRNA in the assembled 50S subunit and ribosome. Functionally, the globular domain of the protein is located near the polypeptide exit tunnel on the outside of the subunit, while an extended beta-hairpin is found that lines the wall of the exit tunnel in the center of the 70S ribosome. This Francisella philomiragia subsp. philomiragia (strain ATCC 25017 / CCUG 19701 / FSC 153 / O#319-036) protein is Large ribosomal subunit protein uL22.